Consider the following 282-residue polypeptide: MPELPEVETVCRGLNELTSGKVIKDAEVLLPRSLASPSSVDEFLSNIRGVIFGEWQRRGKYLLGTLVKESGEAAGWLGVHLRMTGQLLWVNQSEPLQIHTRLRLFCGENKELRFVDIRTFGKVWCVPPKTTPETIITGLKKLGVEPFSDDFSDDYFTTKLNGRQRNIKTLLLDQEIVAGLGNIYADEALFKSGVHPTTLGKNLKPQQIEQLRIAIIEVLETAIEKGGTTFSDFKGVTGINGNYGGTAWVYGRTGEPCRVCGTSIERLKLGGRSAHFCPRCQA.

The active-site Schiff-base intermediate with DNA is the proline 2. Glutamate 3 acts as the Proton donor in catalysis. Lysine 60 serves as the catalytic Proton donor; for beta-elimination activity. Histidine 99, arginine 118, and arginine 163 together coordinate DNA. The segment at 248 to 282 adopts an FPG-type zinc-finger fold; that stretch reads WVYGRTGEPCRVCGTSIERLKLGGRSAHFCPRCQA. Residue arginine 272 is the Proton donor; for delta-elimination activity of the active site.

The protein belongs to the FPG family. Monomer. It depends on Zn(2+) as a cofactor.

The enzyme catalyses Hydrolysis of DNA containing ring-opened 7-methylguanine residues, releasing 2,6-diamino-4-hydroxy-5-(N-methyl)formamidopyrimidine.. It carries out the reaction 2'-deoxyribonucleotide-(2'-deoxyribose 5'-phosphate)-2'-deoxyribonucleotide-DNA = a 3'-end 2'-deoxyribonucleotide-(2,3-dehydro-2,3-deoxyribose 5'-phosphate)-DNA + a 5'-end 5'-phospho-2'-deoxyribonucleoside-DNA + H(+). Functionally, involved in base excision repair of DNA damaged by oxidation or by mutagenic agents. Acts as a DNA glycosylase that recognizes and removes damaged bases. Has a preference for oxidized purines, such as 7,8-dihydro-8-oxoguanine (8-oxoG). Has AP (apurinic/apyrimidinic) lyase activity and introduces nicks in the DNA strand. Cleaves the DNA backbone by beta-delta elimination to generate a single-strand break at the site of the removed base with both 3'- and 5'-phosphates. In Rippkaea orientalis (strain PCC 8801 / RF-1) (Cyanothece sp. (strain PCC 8801)), this protein is Formamidopyrimidine-DNA glycosylase.